Here is a 79-residue protein sequence, read N- to C-terminus: Small ribosomal subunit protein uS17 (79 aa).

It belongs to the universal ribosomal protein uS17 family. As to quaternary structure, part of the 30S ribosomal subunit.

Functionally, one of the primary rRNA binding proteins, it binds specifically to the 5'-end of 16S ribosomal RNA. The protein is Small ribosomal subunit protein uS17 of Bartonella tribocorum (strain CIP 105476 / IBS 506).